Consider the following 90-residue polypeptide: DNA-binding protein HU-alpha (90 aa).

It belongs to the bacterial histone-like protein family. In terms of assembly, heterodimer of an alpha and a beta chain.

Functionally, histone-like DNA-binding protein which is capable of wrapping DNA to stabilize it, and thus to prevent its denaturation under extreme environmental conditions. The chain is DNA-binding protein HU-alpha (hupA) from Pseudomonas aeruginosa (strain ATCC 15692 / DSM 22644 / CIP 104116 / JCM 14847 / LMG 12228 / 1C / PRS 101 / PAO1).